The following is a 211-amino-acid chain: MKVTAAFASLLLTAFAAPAPEPVLVSRSAGINYVQNYNGNLGDFTYDESTGTFSMYWEDGVSSDFVVGLGWTTGSSKSITYSAQYSASSSSSYLAVYGWVNSPQAEYYIVEDYGDYNPCSSATSLGTVYSDGSTYQVCTDTRTNAPSITGTSTFTQYFSVRESTRTSGTVTIANHFNFWAQHGFGNSNFNYQVMAVEAWNGAGSASVTISS.

Positions 1–16 (MKVTAAFASLLLTAFA) are cleaved as a signal peptide. The GH11 domain occupies 19-210 (APEPVLVSRS…GAGSASVTIS (192 aa)). The Nucleophile role is filled by Glu-106. The Proton donor role is filled by Glu-197.

It belongs to the glycosyl hydrolase 11 (cellulase G) family.

The protein resides in the secreted. The catalysed reaction is Endohydrolysis of (1-&gt;4)-beta-D-xylosidic linkages in xylans.. It functions in the pathway glycan degradation; xylan degradation. Endo-1,4-beta-xylanase involved in the hydrolysis of xylan, a major structural heterogeneous polysaccharide found in plant biomass representing the second most abundant polysaccharide in the biosphere, after cellulose. The polypeptide is Probable endo-1,4-beta-xylanase 5 (XYN5) (Aspergillus niger (strain ATCC MYA-4892 / CBS 513.88 / FGSC A1513)).